The sequence spans 1199 residues: DNA-directed RNA polymerase subunit beta (1199 aa).

Positions 1175 to 1199 are disordered; sequence EEKKAHEAAAQATDGKSANSTDDKK. Over residues 1188-1199 the composition is skewed to polar residues; sequence DGKSANSTDDKK.

It belongs to the RNA polymerase beta chain family. As to quaternary structure, the RNAP catalytic core consists of 2 alpha, 1 beta, 1 beta' and 1 omega subunit. When a sigma factor is associated with the core the holoenzyme is formed, which can initiate transcription.

The enzyme catalyses RNA(n) + a ribonucleoside 5'-triphosphate = RNA(n+1) + diphosphate. DNA-dependent RNA polymerase catalyzes the transcription of DNA into RNA using the four ribonucleoside triphosphates as substrates. This is DNA-directed RNA polymerase subunit beta from Lacticaseibacillus paracasei (strain ATCC 334 / BCRC 17002 / CCUG 31169 / CIP 107868 / KCTC 3260 / NRRL B-441) (Lactobacillus paracasei).